Reading from the N-terminus, the 1106-residue chain is Protein translocase subunit SecA (1106 aa).

ATP contacts are provided by residues glutamine 175, 193 to 197, and aspartate 694; that span reads GEGKT. Residues 1021–1106 are disordered; it reads QEAPADEQQP…KYKNCHGQNA (86 aa). Residues 1042–1056 are compositionally biased toward basic and acidic residues; the sequence is QRQDMSKYREQKQDL. A compositionally biased stretch (polar residues) spans 1057–1067; that stretch reads SDPNQQAAASQ. Over residues 1068 to 1085 the composition is skewed to basic and acidic residues; that stretch reads DTREQQKREPIRAEKTVG. Zn(2+) contacts are provided by cysteine 1090, cysteine 1092, cysteine 1101, and histidine 1102.

This sequence belongs to the SecA family. Monomer and homodimer. Part of the essential Sec protein translocation apparatus which comprises SecA, SecYEG and auxiliary proteins SecDF. Other proteins may also be involved. Zn(2+) is required as a cofactor.

It localises to the cell inner membrane. It is found in the cytoplasm. It catalyses the reaction ATP + H2O + cellular proteinSide 1 = ADP + phosphate + cellular proteinSide 2.. In terms of biological role, part of the Sec protein translocase complex. Interacts with the SecYEG preprotein conducting channel. Has a central role in coupling the hydrolysis of ATP to the transfer of proteins into and across the cell membrane, serving as an ATP-driven molecular motor driving the stepwise translocation of polypeptide chains across the membrane. This Bacteroides thetaiotaomicron (strain ATCC 29148 / DSM 2079 / JCM 5827 / CCUG 10774 / NCTC 10582 / VPI-5482 / E50) protein is Protein translocase subunit SecA.